Reading from the N-terminus, the 483-residue chain is V-type proton ATPase subunit H (483 aa).

S483 is modified (phosphoserine).

This sequence belongs to the V-ATPase H subunit family. As to quaternary structure, V-ATPase is a heteromultimeric enzyme made up of two complexes: the ATP-hydrolytic V1 complex and the proton translocation V0 complex. The V1 complex consists of three catalytic AB heterodimers that form a heterohexamer, three peripheral stalks each consisting of EG heterodimers, one central rotor including subunits D and F, and the regulatory subunits C and H. The proton translocation complex V0 consists of the proton transport subunit a, a ring of proteolipid subunits c9c'', rotary subunit d, subunits e and f, and the accessory subunits ATP6AP1/Ac45 and ATP6AP2/PRR. Interacts with AP2M1. In terms of tissue distribution, expressed in brain (at protein level).

It is found in the cytoplasmic vesicle. The protein resides in the clathrin-coated vesicle membrane. In terms of biological role, subunit of the V1 complex of vacuolar(H+)-ATPase (V-ATPase), a multisubunit enzyme composed of a peripheral complex (V1) that hydrolyzes ATP and a membrane integral complex (V0) that translocates protons. V-ATPase is responsible for acidifying and maintaining the pH of intracellular compartments and in some cell types, is targeted to the plasma membrane, where it is responsible for acidifying the extracellular environment. Subunit H is essential for V-ATPase activity, but not for the assembly of the complex. Involved in the endocytosis mediated by clathrin-coated pits, required for the formation of endosomes. The sequence is that of V-type proton ATPase subunit H (ATP6V1H) from Bos taurus (Bovine).